The following is a 62-amino-acid chain: uncharacterized protein (62 aa).

It localises to the mitochondrion. This is an uncharacterized protein from Marchantia polymorpha (Common liverwort).